We begin with the raw amino-acid sequence, 43 residues long: Potassium channel toxin gamma-KTx 4.3 (43 aa).

4 disulfides stabilise this stretch: C5–C23, C11–C34, C20–C39, and C24–C41.

The protein belongs to the ergtoxin family. Gamma-KTx 4 subfamily. Expressed by the venom gland.

Its subcellular location is the secreted. Functionally, reversibly blocks Kv11/ERG potassium channels. In Centruroides exilicauda (Bark scorpion), this protein is Potassium channel toxin gamma-KTx 4.3.